A 526-amino-acid chain; its full sequence is Probable Xaa-Pro aminopeptidase MGG_05684 (526 aa).

4 residues coordinate Mn(2+): Asp285, Asp296, Glu447, and Glu488.

It belongs to the peptidase M24B family. The cofactor is Mn(2+).

It catalyses the reaction Release of any N-terminal amino acid, including proline, that is linked to proline, even from a dipeptide or tripeptide.. Its function is as follows. Catalyzes the removal of a penultimate prolyl residue from the N-termini of peptides. In Pyricularia oryzae (strain 70-15 / ATCC MYA-4617 / FGSC 8958) (Rice blast fungus), this protein is Probable Xaa-Pro aminopeptidase MGG_05684.